Consider the following 86-residue polypeptide: MATKKAGGSSRNGRDSAGRRLGVKKADGQYVIPGNIIVRQRGTKIHPGMNVGLGKDHTIFALIEGRVEFLTKRNHKIVNVKEIAST.

The segment at 1–22 (MATKKAGGSSRNGRDSAGRRLG) is disordered.

The protein belongs to the bacterial ribosomal protein bL27 family.

This Rickettsia rickettsii (strain Iowa) protein is Large ribosomal subunit protein bL27.